The sequence spans 202 residues: Small ribosomal subunit protein uS4c (202 aa).

The S4 RNA-binding domain occupies Met90–Lys158.

Belongs to the universal ribosomal protein uS4 family. Part of the 30S ribosomal subunit. Contacts protein S5. The interaction surface between S4 and S5 is involved in control of translational fidelity.

It is found in the plastid. The protein resides in the chloroplast. In terms of biological role, one of the primary rRNA binding proteins, it binds directly to 16S rRNA where it nucleates assembly of the body of the 30S subunit. With S5 and S12 plays an important role in translational accuracy. This is Small ribosomal subunit protein uS4c (rps4) from Exsertotheca crispa (Moss).